The following is a 1019-amino-acid chain: MRNGLVWLLHPALPGTLRSILGARPPPAKRLCGFPKQTYSTMSNPAIQRIEDQIVKSPEDKREYRGLELANGIKVLLISDPTTDKSSAALDVHIGSLSDPPNIPGLSHFCEHMLFLGTKKYPKENEYSQFLSEHAGSSNAFTSGEHTNYYFDVSHEHLEGALDRFAQFFLCPLLDASCKDREVNAVDSEHEKNVMNDAWRLFQLEKATGNPKHPFSKFGTGNKYTLETRPNQEGIDVREELLKFHSTYYSSNLMAICVLGRESLDDLTNLVVKLFSEVENKNVPLPEFPEHPFQEEHLRQLYKIVPIKDIRNLYVTFPIPDLQQYYKSNPGYYLGHLIGHEGPGSLLSELKSKGWVNTLVGGQKEGARGFMFFIINVDLTEEGLLHVEDIILHMFQYIQKLRAEGPQEWVFQECKDLNAVAFRFKDKERPRGYTSKIAGKLHYYPLNGVLTAEYLLEEFRPDLIDMVLDKLRPENVRVAIVSKSFEGKTDRTEQWYGTQYKQEAIPEDVIQKWQNADLNGKFKLPTKNEFIPTNFEILSLEKDATPYPALIKDTAMSKLWFKQDDKFFLPKACLNFEFFSPFAYVDPLHCNMAYLYLELLKDSLNEYAYAAELAGLSYDLQNTIYGMYLSVKRYNDKQPILLKKITEKMATFEIDKKRFEIIKEAYMRSLNNFRAEQPHQHAMYYLRLLMTEVAWTKDELKEALDDVTLPRLKAFIPQLLSRLHIEALLHGNITKQAALGVMQMVEDTLIEHAHTKPLLPSQLVRYREVQLPDRGWFVYQQRNEVHNNCGIEIYYQTDMQSTSENMFLELFCQIISEPCFNTLRTKEQLGYIVFSGPRRANGIQGLRFIIQSEKPPHYLESRVEAFLITMEKAIEDMTEEAFQKHIQALAIRRLDKPKKLSAECAKYWGEIISQQYNYDRDNIEVAYLKTLTKDDIIRFYQEMLAVDAPRRHKVSVHVLAREMDSCPVVGEFPSQNDINLSEAPPLPQPEVIHNMTEFKRGLPLFPLVKPHINFMAAKL.

Residue H108 participates in Zn(2+) binding. E111 functions as the Proton acceptor in the catalytic mechanism. 2 residues coordinate Zn(2+): H112 and E189. K192 carries the post-translational modification N6-succinyllysine. 359-363 (LVGGQ) is a substrate binding site. Residue R429 coordinates ATP. Position 697 is an N6-succinyllysine (K697). Residues 853–858 (EKPPHY) carry the SlyX motif motif. 895–901 (DKPKKLS) is a binding site for ATP.

Belongs to the peptidase M16 family. In terms of assembly, homodimer. Can also form homotetramers. The cofactor is Zn(2+). In terms of tissue distribution, detected in brain and liver (at protein level). Detected in liver.

It localises to the cytoplasm. It is found in the cytosol. The protein resides in the cell membrane. Its subcellular location is the secreted. The enzyme catalyses Degradation of insulin, glucagon and other polypeptides. No action on proteins.. Its activity is regulated as follows. Activated by ATP, other nucleotide triphosphates and small peptides. Inhibited by bacitracin. Functionally, plays a role in the cellular breakdown of insulin, APP peptides, IAPP peptides, natriuretic peptides, glucagon, bradykinin, kallidin, and other peptides, and thereby plays a role in intercellular peptide signaling. Substrate binding induces important conformation changes, making it possible to bind and degrade larger substrates, such as insulin. Contributes to the regulation of peptide hormone signaling cascades and regulation of blood glucose homeostasis via its role in the degradation of insulin, glucagon and IAPP. Plays a role in the degradation and clearance of APP-derived amyloidogenic peptides that are secreted by neurons and microglia. Degrades the natriuretic peptides ANP, BNP and CNP, inactivating their ability to raise intracellular cGMP. Also degrades an aberrant frameshifted 40-residue form of NPPA (fsNPPA) which is associated with familial atrial fibrillation in heterozygous patients. Involved in antigen processing. Produces both the N terminus and the C terminus of MAGEA3-derived antigenic peptide (EVDPIGHLY) that is presented to cytotoxic T lymphocytes by MHC class I. The sequence is that of Insulin-degrading enzyme (Ide) from Mus musculus (Mouse).